A 122-amino-acid chain; its full sequence is Large ribosomal subunit protein uL14 (122 aa).

The protein belongs to the universal ribosomal protein uL14 family. Part of the 50S ribosomal subunit. Forms a cluster with proteins L3 and L19. In the 70S ribosome, L14 and L19 interact and together make contacts with the 16S rRNA in bridges B5 and B8.

Its function is as follows. Binds to 23S rRNA. Forms part of two intersubunit bridges in the 70S ribosome. This Staphylococcus aureus (strain MW2) protein is Large ribosomal subunit protein uL14.